A 2258-amino-acid polypeptide reads, in one-letter code: Probable serine/threonine-protein kinase ifkA (2258 aa).

Disordered stretches follow at residues 43–108 (RVNS…HQMG) and 189–308 (EMNN…KEND). The segment covering 45–57 (NSSDDINNNNNNN) has biased composition (low complexity). The segment covering 58–100 (NDDDDDNDDYDDSDDENSDSDYDDYDDSDDENSDDEFYSDDED) has biased composition (acidic residues). Over residues 191 to 301 (NNLTNSNNSN…NKELIDNNNN (111 aa)) the composition is skewed to low complexity. The stretch at 273–309 (NNNNNISNNKINKINNNNNNKELIDNNNNNKDKENDL) forms a coiled coil. In terms of domain architecture, Protein kinase 1 spans 319–691 (WKKGSCIERK…AGILLKHPFL (373 aa)). ATP is bound by residues 325-333 (IERKSNYSV) and K348. The tract at residues 358–398 (SSSSLTSLSNSNNNNSNNNNNNNNNNNNNNNNNNNNNNNNN) is disordered. Low complexity predominate over residues 359–398 (SSSLTSLSNSNNNNSNNNNNNNNNNNNNNNNNNNNNNNNN). The active-site Proton acceptor is D498. Disordered stretches follow at residues 741–768 (KSQT…NGSN) and 782–870 (PLAT…MTPL). The segment covering 746 to 768 (NNNNDNNNLASSNELLSSSNGSN) has biased composition (low complexity). Positions 782 to 791 (PLATSSSLDN) are enriched in polar residues. Pro residues predominate over residues 793 to 805 (TPPPSRPISPKPS). The segment covering 841 to 870 (PQQNFNTPPTTTTTTTTPTATPTTPTMTPL) has biased composition (low complexity). Residues 894–1482 (FEEIEMIGKG…TKQLLESGLL (589 aa)) form the Protein kinase 2 domain. Residues 900 to 908 (IGKGGFGVV) and K923 contribute to the ATP site. Low complexity predominate over residues 1053–1094 (TLSSSNTSSSSSLLSNNKSKILNTSKSTSTNTSTSTSTSNTN). A disordered region spans residues 1053 to 1259 (TLSSSNTSSS…SSSRKKPPKE (207 aa)). The span at 1095-1106 (KNKKISKKKKSK) shows a compositional bias: basic residues. Residues 1156–1185 (NNNNNNDNNNNYHSDNESDSFSGSISMSDG) show a composition bias toward low complexity. Over residues 1206–1233 (DENENDDDDEEDDDDEYDEEDDDYETFD) the composition is skewed to acidic residues. The segment covering 1242 to 1251 (SNNSKLSTSS) has biased composition (low complexity). D1313 (proton acceptor) is an active-site residue. Disordered stretches follow at residues 1343–1370 (KSDD…TAQQ) and 2048–2104 (GSGG…QQTS). A compositionally biased stretch (low complexity) spans 1347–1368 (LNSSTSNTANNINLSSSTNSTA). Positions 2048 to 2072 (GSGGSGGSGGGSSMSSGGGGGGNSN) are enriched in gly residues. Over residues 2085–2099 (SNQSTSSSGNSNNSN) the composition is skewed to low complexity.

The protein belongs to the protein kinase superfamily. Ser/Thr protein kinase family.

It carries out the reaction L-seryl-[protein] + ATP = O-phospho-L-seryl-[protein] + ADP + H(+). The catalysed reaction is L-threonyl-[protein] + ATP = O-phospho-L-threonyl-[protein] + ADP + H(+). Phosphorylates eIF2-alpha, from 1 to 7 hours after the onset of development or during the preaggregation state, resulting in a shift from polysomes to free ribosomes for bulk mRNA. The polypeptide is Probable serine/threonine-protein kinase ifkA (ifkA) (Dictyostelium discoideum (Social amoeba)).